We begin with the raw amino-acid sequence, 807 residues long: Sucrose synthase 2 (807 aa).

Residues 274–752 (MVFNVVILSP…GLKRIYERYT (479 aa)) are GT-B glycosyltransferase.

Belongs to the glycosyltransferase 1 family. Plant sucrose synthase subfamily. In terms of tissue distribution, detected in the whole plant but at lower levels. Predominantly expressed in developing siliques. Also detected in the root tip. Detected in the embryo, endosperm and seed coat (at the protein level).

The protein resides in the cytoplasm. It localises to the plastid membrane. It catalyses the reaction an NDP-alpha-D-glucose + D-fructose = a ribonucleoside 5'-diphosphate + sucrose + H(+). In terms of biological role, sucrose-cleaving enzyme that provides UDP-glucose and fructose for various metabolic pathways. Modulates metabolic homeostasis and directs carbon towards starch synthesis in developing seeds. The polypeptide is Sucrose synthase 2 (SUS2) (Arabidopsis thaliana (Mouse-ear cress)).